Here is a 354-residue protein sequence, read N- to C-terminus: Glycerol-1-phosphate dehydrogenase [NAD(P)+] (354 aa).

Residues 103–107 and 125–128 contribute to the NAD(+) site; these read GRSVD and TAAS. Aspartate 130 is a binding site for substrate. Serine 134 contributes to the NAD(+) binding site. Residue aspartate 176 coordinates substrate. Zn(2+) is bound by residues aspartate 176 and histidine 255. Histidine 259 contributes to the substrate binding site. Zn(2+) is bound at residue histidine 271.

It belongs to the glycerol-1-phosphate dehydrogenase family. In terms of assembly, homodimer. It depends on Zn(2+) as a cofactor.

The protein resides in the cytoplasm. The catalysed reaction is sn-glycerol 1-phosphate + NAD(+) = dihydroxyacetone phosphate + NADH + H(+). The enzyme catalyses sn-glycerol 1-phosphate + NADP(+) = dihydroxyacetone phosphate + NADPH + H(+). It functions in the pathway membrane lipid metabolism; glycerophospholipid metabolism. Catalyzes the NAD(P)H-dependent reduction of dihydroxyacetonephosphate (DHAP or glycerone phosphate) to glycerol 1-phosphate (G1P). The G1P thus generated is used as the glycerophosphate backbone of phospholipids in the cellular membranes of Archaea. The chain is Glycerol-1-phosphate dehydrogenase [NAD(P)+] from Nitrosopumilus maritimus (strain SCM1).